A 267-amino-acid chain; its full sequence is 3-methyl-2-oxobutanoate hydroxymethyltransferase (267 aa).

Residues aspartate 45 and aspartate 84 each coordinate Mg(2+). Residues 45–46 (DS), aspartate 84, and lysine 113 contribute to the 3-methyl-2-oxobutanoate site. Residue glutamate 115 coordinates Mg(2+). Glutamate 182 serves as the catalytic Proton acceptor.

The protein belongs to the PanB family. In terms of assembly, homodecamer; pentamer of dimers. It depends on Mg(2+) as a cofactor.

The protein localises to the cytoplasm. It catalyses the reaction 3-methyl-2-oxobutanoate + (6R)-5,10-methylene-5,6,7,8-tetrahydrofolate + H2O = 2-dehydropantoate + (6S)-5,6,7,8-tetrahydrofolate. The protein operates within cofactor biosynthesis; coenzyme A biosynthesis. Catalyzes the reversible reaction in which hydroxymethyl group from 5,10-methylenetetrahydrofolate is transferred onto alpha-ketoisovalerate to form ketopantoate. The polypeptide is 3-methyl-2-oxobutanoate hydroxymethyltransferase (Sulfurisphaera tokodaii (strain DSM 16993 / JCM 10545 / NBRC 100140 / 7) (Sulfolobus tokodaii)).